The sequence spans 459 residues: Fibrinogen C domain-containing protein 1 (459 aa).

Positions 1–22 (MVHERWKTVGSASQLEDRPRDK) are disordered. Over 1-33 (MVHERWKTVGSASQLEDRPRDKPQRASCSYVLC) the chain is Cytoplasmic. A helical; Signal-anchor for type II membrane protein membrane pass occupies residues 34–54 (TVLLSLAVLLAVAVTGVVLFL). Over 55 to 459 (NHTHTPGTAP…MKIRPVREDR (405 aa)) the chain is Extracellular. The Fibrinogen C-terminal domain maps to 233–456 (CANGSRPRDC…FSEMKIRPVR (224 aa)). Residues cysteine 242 and cysteine 271 are joined by a disulfide bond. Asparagine 338 carries N-linked (GlcNAc...) asparagine glycosylation. Residues aspartate 391 and aspartate 393 each contribute to the Ca(2+) site. An intrachain disulfide couples cysteine 399 to cysteine 412.

As to quaternary structure, homotetramer; disulfide-linked.

Its subcellular location is the membrane. Acetyl group-binding receptor which shows a high-affinity and calcium-dependent binding to acetylated structures such as chitin, some N-acetylated carbohydrates, and amino acids, but not to their non-acetylated counterparts. Can facilitate the endocytosis of acetylated components. The sequence is that of Fibrinogen C domain-containing protein 1 (Fibcd1) from Mus musculus (Mouse).